The following is a 650-amino-acid chain: Rab proteins geranylgeranyltransferase component A 1 (650 aa).

Disordered regions lie at residues 156–208 (IPAE…ETPK) and 603–650 (PAPP…EPSE). Positions 177-190 (ATGKKENSDAKSST) are enriched in basic and acidic residues. Polar residues predominate over residues 616 to 634 (DSSQQEVPESSVTPETNSE).

This sequence belongs to the Rab GDI family. Monomer. Heterotrimer composed of RABGGTA, RABGGTB and CHM; within this trimer, RABGGTA and RABGGTB form the catalytic component B, while CHM (component A) mediates Rab protein binding. Can associate with the Rab GGTase dimer (RGGT or component B) prior to Rab protein binding; the association is stabilized by geranylgeranyl pyrophosphate (GGpp). The CHM:RGGT:Rab complex is destabilized by GGpp. Interacts with RAB1A, RAB1B, RAB7A and RAB27A and mediates their prenylation. Interacts with RAB5A. Interacts with the non-phosphorylated forms of RAB3A, RAB3B, RAB3C, RAB3D, RAB5B, RAB5C RAB8A, RAB8B, RAB10, RAB12, RAB35, and RAB43. As to expression, most abundant in the heart, brain, and spleen. Lower levels seen in the lung, liver, muscle and kidney. Extremely low levels seen in the testis.

It localises to the cytoplasm. The protein resides in the cytosol. Its function is as follows. Substrate-binding subunit of the Rab geranylgeranyltransferase (GGTase) complex. Binds unprenylated Rab proteins and presents the substrate peptide to the catalytic component B composed of RABGGTA and RABGGTB, and remains bound to it after the geranylgeranyl transfer reaction. The component A is thought to be regenerated by transferring its prenylated Rab back to the donor membrane. Besides, a pre-formed complex consisting of CHM and the Rab GGTase dimer (RGGT or component B) can bind to and prenylate Rab proteins; this alternative pathway is proposed to be the predominant pathway for Rab protein geranylgeranylation. The sequence is that of Rab proteins geranylgeranyltransferase component A 1 (Chm) from Rattus norvegicus (Rat).